Consider the following 25-residue polypeptide: C-reactive protein P2 subunit 4 (25 aa).

Residues 1–25 (GRSLVFPEETANSFVELFPAKELSL) enclose the Pentraxin (PTX) domain.

Belongs to the pentraxin family. As to quaternary structure, heteropentamer. Discoid arrangement of 5 non-covalently bound subunits 1, 2, 3 and 4. It depends on Ca(2+) as a cofactor. In terms of processing, glycosylated.

It localises to the secreted. Displays several functions associated with host defense: it promotes agglutination, bacterial capsular swelling, phagocytosis, and complement fixation through its calcium-dependent binding to phosphorylcholine. This is C-reactive protein P2 subunit 4 from Gadus morhua (Atlantic cod).